We begin with the raw amino-acid sequence, 361 residues long: Peptide chain release factor 1 (361 aa).

Glutamine 236 bears the N5-methylglutamine mark.

The protein belongs to the prokaryotic/mitochondrial release factor family. Post-translationally, methylated by PrmC. Methylation increases the termination efficiency of RF1.

It localises to the cytoplasm. Peptide chain release factor 1 directs the termination of translation in response to the peptide chain termination codons UAG and UAA. This chain is Peptide chain release factor 1, found in Lactobacillus delbrueckii subsp. bulgaricus (strain ATCC BAA-365 / Lb-18).